A 344-amino-acid chain; its full sequence is Small ribosomal subunit protein uS3 (344 aa).

The KH type-2 domain occupies 38 to 106 (LKAALRERLK…EVFIDIQEVH (69 aa)). A disordered region spans residues 217 to 344 (PEPEPRREQR…QKPEGSGENQ (128 aa)). Basic and acidic residues-rich tracts occupy residues 219–259 (PEPR…RGDR) and 335–344 (QKPEGSGENQ).

This sequence belongs to the universal ribosomal protein uS3 family. Part of the 30S ribosomal subunit. Forms a tight complex with proteins S10 and S14.

Functionally, binds the lower part of the 30S subunit head. Binds mRNA in the 70S ribosome, positioning it for translation. The chain is Small ribosomal subunit protein uS3 from Solibacter usitatus (strain Ellin6076).